Reading from the N-terminus, the 310-residue chain is Zinc finger protein unc-98 (310 aa).

Residues Gly73–Ser84 show a composition bias toward polar residues. Residues Gly73–Ser102 form a disordered region. C2H2-type zinc fingers lie at residues Tyr113–His135 and Tyr141–His163. A C2H2-type 3; degenerate zinc finger spans residues Tyr169–His188. Positions Ala198 to Phe310 are interaction with myo-3. A C2H2-type 4 zinc finger spans residues Tyr246–His268.

Interacts with hum-6, mep-1, myo-3, unc-96 and unc-97/PINCH. As to expression, expressed in embryos from 1.5- to 2-fold stage in myofibrils. In larvae and adults, it is expressed in body wall muscle, and in addition, anal depressor muscle and vulval muscles. More specifically it is found in the thick filaments of muscle fibers.

The protein resides in the nucleus. It localises to the cytoplasm. Functionally, probable transcription factor required for muscle structure. Its dual subcellular localization suggests that it may function both as a muscle adhesion complex protein and as a transcription factor, or work together with transcription factors, to influence gene expression. Thought to act as a molecular bridge between unc-97 and myo-3 at the M-line of muscles, possibly in a signaling role. Plays a role in the formation of muscle connections, also called muscle arm extensions, between the body wall and the motor axons in the dorsal and ventral cord. The sequence is that of Zinc finger protein unc-98 (unc-98) from Caenorhabditis elegans.